We begin with the raw amino-acid sequence, 407 residues long: Dephospho-CoA kinase (407 aa).

The region spanning 3–204 (RIGLTGGIGA…QPFAHNLAQR (202 aa)) is the DPCK domain. 11–16 (GAGKSL) contacts ATP. The tract at residues 196–407 (PFAHNLAQRQ…EWADAVHWRP (212 aa)) is UPF0157.

This sequence in the N-terminal section; belongs to the CoaE family. The protein in the C-terminal section; belongs to the UPF0157 (GrpB) family.

Its subcellular location is the cytoplasm. The catalysed reaction is 3'-dephospho-CoA + ATP = ADP + CoA + H(+). It participates in cofactor biosynthesis; coenzyme A biosynthesis; CoA from (R)-pantothenate: step 5/5. Functionally, catalyzes the phosphorylation of the 3'-hydroxyl group of dephosphocoenzyme A to form coenzyme A. This is Dephospho-CoA kinase from Mycobacterium bovis (strain ATCC BAA-935 / AF2122/97).